We begin with the raw amino-acid sequence, 456 residues long: uncharacterized protein (456 aa).

Residues Ile-277–Lys-440 form the YrdC-like domain.

This is an uncharacterized protein from Mycoplasma genitalium (strain ATCC 33530 / DSM 19775 / NCTC 10195 / G37) (Mycoplasmoides genitalium).